The primary structure comprises 901 residues: MLIPSKLSRPVRLDHTVVRERLLAKLSGANNFRLALITSPAGYGKTTLISQWAAGKNDIGWYSLDEGDNQQERFASYLIAAVQQATNGHCAICETMAQKRQYASLTSLFAQLFIELAEWHSPLYLVIDDYHLITNPVIHESMRFFIRHQPENLTLVVLSRNLPQLGIANLRVRDQLLEIGSQQLAFTHQEAKQFFDCRLSSPIEAAESSRICDDVSGWATALQLIALSARQNTHSAHKSARRLAGINASHLSDYLVDEVLDNVDLATRHFLLKSAILRSMNDALITRVTGEENGQMRLEEIERQGLFLQRMDDTGEWFCYHPLFGNFLRQRCQWELAAELPEIHRAAAESWMAQGFPSEAIHHALAAGDALMLRDILLNHAWSLFNHSELSLLEESLKALPWDSLLENPQLVLLQAWLMQSQHRYGEVNTLLARAEHEIKDIREGTMHAEFNALRAQVAINDGNPDEAERLAKLALEELPPGWFYSRIVATSVLGEVLHCKGELTRSLALMQQTEQMARQHDVWHYALWSLIQQSEILFAQGFLQTAWETQEKAFQLINEQHLEQLPMHEFLVRIRAQLLWAWARLDEAEASARSGIEVLSSYQPQQQLQCLAMLIQCSLARGDLDNARSQLNRLENLLGNGKYHSDWISNANKVRVMYWQMTGDKAAAANWLRHTAKPEFANNHFLQGQWRNIARAQILLGEFESAEIVLEELNENARSLRLMSDLNRNLLLLNQLYWQAGRKSDAQRVLLDALKLANRTGFISHFVIEGEAMAQQLRQLIQLNTLPELEQHRAQRILREINQHHRHKFAHFDENFVERLLNHPEVPELIRTSPLTQREWQVLGLIYSGYSNEQIAGELEVAATTIKTHIRNLYQKLGVAHRQAAVQHAQKLLKMMGYGV.

39–46 (SPAGYGKT) serves as a coordination point for ATP. An HTH luxR-type domain is found at 829–894 (ELIRTSPLTQ…AAVQHAQKLL (66 aa)). The segment at residues 853 to 872 (NEQIAGELEVAATTIKTHIR) is a DNA-binding region (H-T-H motif).

It belongs to the MalT family. In terms of assembly, monomer in solution. Oligomerizes to an active state in the presence of the positive effectors ATP and maltotriose.

With respect to regulation, activated by ATP and maltotriose, which are both required for DNA binding. Functionally, positively regulates the transcription of the maltose regulon whose gene products are responsible for uptake and catabolism of malto-oligosaccharides. Specifically binds to the promoter region of its target genes, recognizing a short DNA motif called the MalT box. In Escherichia coli O6:H1 (strain CFT073 / ATCC 700928 / UPEC), this protein is HTH-type transcriptional regulator MalT.